The following is a 533-amino-acid chain: Cytochrome P450 monooxygenase calL (533 aa).

A helical membrane pass occupies residues 8-28 (TQLALLVWGIAVCVTLAIVVP). N-linked (GlcNAc...) asparagine glycosylation is present at N33. Residues 123–148 (GKFKQDQSGRSKNPVPGHDVKPGQPR) form a disordered region. N388 is a glycosylation site (N-linked (GlcNAc...) asparagine). C467 is a binding site for heme.

The protein belongs to the cytochrome P450 family. Heme serves as cofactor.

It is found in the membrane. Its pathway is secondary metabolite biosynthesis. Cytochrome P450 monooxygenase; part of the gene cluster that mediates the biosynthesis of calbistrin A and related compounds. Calbistrin A is a secondary metabolite with an interesting structure that was recently found to have bioactivity against leukemia cells. It consists of two polyketides linked by an ester bond: a bicyclic decalin containing polyketide and a linear 12 carbon dioic acid structure. The polyketide synthase calA is probably responsible for forming the decalin moiety. Because calA lacks a designated enoylreductase (ER) domain, the required activity is provided by the trans-enoyl reductase calK. Following release from the PKS, calF then probably catalyzes the oxidation and the subsequent Diels Alder cycloisomerization that lead to the formation of the decalin moiety. The decalin polyketide backbone includes two C-methyl groups, at C7 and C11 in backbone, of which the C7 position is probably methylated by the methyltransferase domain of calA. A candidate for adding the methyl group at C11, if not done by CalA, is the cluster methyltransferase calH. Several additional tailoring enzymes within the cluster could be involved in the modification of the decalin polyketide product. Those include the 3 cytochrome P450 monooxygenases CalE, CalG and CalL, of which one might be responsible for the introduction of the extra hydroxyl group attached to the backbone of the decalin moiety, at position C9 in the backbone, that allows for attachment of the linear moiety. One tailoring enzyme activity that is expected to be involved in biosynthesis of calbistrin is an acyltransferase for connecting the two polyketide synthase products, and which could be performed by the cluster acyltransferase calJ. The enzyme responsible for the biosynthesis of the linear moiety, probably a second PKS, has not been identified yet. This Penicillium decumbens protein is Cytochrome P450 monooxygenase calL.